The chain runs to 947 residues: Translation initiation factor IF-2 (947 aa).

The segment at 61-284 is disordered; that stretch reads IQANQPAKNP…TAKNNKSHKI (224 aa). Residues 151–169 are compositionally biased toward basic and acidic residues; sequence QIEKAKQKLQEIQKSREAL. Positions 175 to 188 are enriched in low complexity; the sequence is SNANNANSTNNANN. Positions 189 to 206 are enriched in basic and acidic residues; sequence AKKEISEVKKQEQEIKRH. Over residues 207–218 the composition is skewed to basic residues; it reads ENIKRRTGFRVI. Over residues 247–262 the composition is skewed to basic and acidic residues; that stretch reads EDIKKEWQEKDKQEAK. The 170-residue stretch at 446–615 folds into the tr-type G domain; sequence ERPPVVTIMG…LIQADIMELK (170 aa). A G1 region spans residues 455–462; that stretch reads GHVDHGKT. 455–462 lines the GTP pocket; the sequence is GHVDHGKT. A G2 region spans residues 480 to 484; it reads GITQH. The G3 stretch occupies residues 501 to 504; it reads DTPG. Residues 501-505 and 555-558 each bind GTP; these read DTPGH and NKMD. Positions 555-558 are G4; the sequence is NKMD. The G5 stretch occupies residues 591–593; that stretch reads SAK.

Belongs to the TRAFAC class translation factor GTPase superfamily. Classic translation factor GTPase family. IF-2 subfamily.

The protein resides in the cytoplasm. In terms of biological role, one of the essential components for the initiation of protein synthesis. Protects formylmethionyl-tRNA from spontaneous hydrolysis and promotes its binding to the 30S ribosomal subunits. Also involved in the hydrolysis of GTP during the formation of the 70S ribosomal complex. The protein is Translation initiation factor IF-2 of Helicobacter pylori (strain P12).